The following is a 378-amino-acid chain: Ribosomal RNA large subunit methyltransferase G (378 aa).

This sequence belongs to the methyltransferase superfamily. RlmG family.

Its subcellular location is the cytoplasm. The catalysed reaction is guanosine(1835) in 23S rRNA + S-adenosyl-L-methionine = N(2)-methylguanosine(1835) in 23S rRNA + S-adenosyl-L-homocysteine + H(+). Functionally, specifically methylates the guanine in position 1835 (m2G1835) of 23S rRNA. The chain is Ribosomal RNA large subunit methyltransferase G from Salmonella arizonae (strain ATCC BAA-731 / CDC346-86 / RSK2980).